Consider the following 653-residue polypeptide: Structural protein ORF653 (653 aa).

A coiled-coil region spans residues Ala300 to Leu330. Residues Glu302–Ser326 are compositionally biased toward basic and acidic residues. 3 disordered regions span residues Glu302–Gln329, Gly344–Pro388, and Ala626–Ser653. Over residues Glu371 to Arg381 the composition is skewed to low complexity. Positions Lys505–Thr649 form a coiled coil. The segment covering Glu630–Asn647 has biased composition (acidic residues).

It localises to the virion. This is Structural protein ORF653 from Acidianus two-tailed virus (ATV).